The following is a 474-amino-acid chain: NADH-ubiquinone oxidoreductase chain 4 (474 aa).

13 helical membrane-spanning segments follow: residues 34 to 54 (SFFLMLVLALFCALFTFDLMF), 86 to 106 (LYGLILVFLCLLTGFVAISTV), 115 to 135 (LKFYLIFFQFFLAVLGFIKCS), 137 to 157 (LIAFFFFYEVLMLGSVLVVFF), 167 to 187 (AVIYFVAWTQLGSLFVLLACL), 211 to 231 (AMTIYSLLFVGFGIKFPIWPL), 242 to 262 (ASTGFSIYLSGFLVKTALFGF), 276 to 295 (TFFLAVLVAGVIDSSLNMWS), 302 to 322 (LVAYCTIQEMNLIAIFFLKGD), 325 to 345 (LIAYGFLFTIMHALMSTLMFF), 373 to 393 (ALAIIFMVLFFSGILGTLKFV), 405 to 425 (VSWPIGVIFVVVVSAIGLIGF), and 454 to 474 (YIIFLCFAGLIFLTFLPFLMI).

This sequence belongs to the complex I subunit 4 family.

It is found in the mitochondrion membrane. The enzyme catalyses a ubiquinone + NADH + 5 H(+)(in) = a ubiquinol + NAD(+) + 4 H(+)(out). Core subunit of the mitochondrial membrane respiratory chain NADH dehydrogenase (Complex I) that is believed to belong to the minimal assembly required for catalysis. Complex I functions in the transfer of electrons from NADH to the respiratory chain. The immediate electron acceptor for the enzyme is believed to be ubiquinone. This is NADH-ubiquinone oxidoreductase chain 4 (ND4) from Paramecium tetraurelia.